A 317-amino-acid polypeptide reads, in one-letter code: MGTGNQTWVREFVLLGLSSDWDTEVSLFVLFLITYMVTVLGNFLIILLIRLDSRLHTPMYFFLTNLSLVDVSYATSIIPQMLAHLLAAHKAIPFVSCAAQLFFSLGLGGIEFVLLAVMAYDRYVAVCDPLRYSVIMHGGLCTRLAITSWVSGSMNSLMQTVITFQLPMCTNKYIDHISCELLAVVRLACVDTSSNEIAIMVSSIVLLMTPFCLVLLSYIQIISTILKIQSTEGRKKAFHTCASHLTVVVLCYGMAIFTYIQPRSSPSVLQEKLISLFYSVLTPMLNPMIYSVRNKEVKGAWQKLLGQLTGITSKLAT.

At 1-25 (MGTGNQTWVREFVLLGLSSDWDTEV) the chain is on the extracellular side. A glycan (N-linked (GlcNAc...) asparagine) is linked at asparagine 5. Residues 26 to 49 (SLFVLFLITYMVTVLGNFLIILLI) form a helical membrane-spanning segment. Over 50 to 57 (RLDSRLHT) the chain is Cytoplasmic. Residues 58-79 (PMYFFLTNLSLVDVSYATSIIP) traverse the membrane as a helical segment. The Extracellular segment spans residues 80-100 (QMLAHLLAAHKAIPFVSCAAQ). A helical transmembrane segment spans residues 101-120 (LFFSLGLGGIEFVLLAVMAY). At 121–139 (DRYVAVCDPLRYSVIMHGG) the chain is on the cytoplasmic side. Residues 140–158 (LCTRLAITSWVSGSMNSLM) form a helical membrane-spanning segment. Topologically, residues 159–196 (QTVITFQLPMCTNKYIDHISCELLAVVRLACVDTSSNE) are extracellular. The chain crosses the membrane as a helical span at residues 197–219 (IAIMVSSIVLLMTPFCLVLLSYI). Topologically, residues 220-236 (QIISTILKIQSTEGRKK) are cytoplasmic. Residues 237-260 (AFHTCASHLTVVVLCYGMAIFTYI) traverse the membrane as a helical segment. Residues 261-272 (QPRSSPSVLQEK) are Extracellular-facing. A helical membrane pass occupies residues 273 to 292 (LISLFYSVLTPMLNPMIYSV). The Cytoplasmic portion of the chain corresponds to 293–317 (RNKEVKGAWQKLLGQLTGITSKLAT).

Belongs to the G-protein coupled receptor 1 family.

Its subcellular location is the cell membrane. Its function is as follows. Putative odorant or sperm cell receptor. The chain is Olfactory receptor-like protein OLF3 from Canis lupus familiaris (Dog).